Consider the following 209-residue polypeptide: Imidazole glycerol phosphate synthase subunit HisH (209 aa).

One can recognise a Glutamine amidotransferase type-1 domain in the interval 1–205; sequence MIAIIDYGMG…QGVVEAWKSS (205 aa). Cys-79 (nucleophile) is an active-site residue. Active-site residues include His-180 and Glu-182.

As to quaternary structure, heterodimer of HisH and HisF.

The protein localises to the cytoplasm. It carries out the reaction 5-[(5-phospho-1-deoxy-D-ribulos-1-ylimino)methylamino]-1-(5-phospho-beta-D-ribosyl)imidazole-4-carboxamide + L-glutamine = D-erythro-1-(imidazol-4-yl)glycerol 3-phosphate + 5-amino-1-(5-phospho-beta-D-ribosyl)imidazole-4-carboxamide + L-glutamate + H(+). It catalyses the reaction L-glutamine + H2O = L-glutamate + NH4(+). It functions in the pathway amino-acid biosynthesis; L-histidine biosynthesis; L-histidine from 5-phospho-alpha-D-ribose 1-diphosphate: step 5/9. In terms of biological role, IGPS catalyzes the conversion of PRFAR and glutamine to IGP, AICAR and glutamate. The HisH subunit catalyzes the hydrolysis of glutamine to glutamate and ammonia as part of the synthesis of IGP and AICAR. The resulting ammonia molecule is channeled to the active site of HisF. The protein is Imidazole glycerol phosphate synthase subunit HisH of Bacillus cereus (strain G9842).